Reading from the N-terminus, the 664-residue chain is Cytoskeleton-associated protein 2 (664 aa).

Residues 1–38 form a disordered region; that stretch reads MAESRKRFLGRAARNPLPVTRDLQLPPTRRDQPAFREQ. The span at 28-38 shows a compositional bias: basic and acidic residues; that stretch reads TRRDQPAFREQ. The tract at residues 160-319 is association with alpha- and beta-tubulin; that stretch reads PKQDSNVSKK…ASKDAARTDS (160 aa). Residue serine 186 is modified to Phosphoserine. Disordered regions lie at residues 254–273, 283–328, 366–393, and 512–545; these read IRSLHSSSHGAAKQGLSRPL, LDKE…MVKP, GKGKGLKRPPHSVVTQAEPKGQSENPVG, and AHATKEPIQEVNADANVGSGKPGEENEHHGKVEV. A compositionally biased stretch (polar residues) spans 300-309; the sequence is GSSQAPSRSI. The segment covering 366–375 has biased composition (basic residues); sequence GKGKGLKRPP. The span at 533 to 545 shows a compositional bias: basic and acidic residues; the sequence is PGEENEHHGKVEV. Position 561 is a phosphothreonine (threonine 561). Serine 577 bears the Phosphoserine mark. At threonine 579 the chain carries Phosphothreonine. A Phosphoserine modification is found at serine 584.

Belongs to the CKAP2 family. In terms of assembly, associates with alpha- and beta-tubulins.

The protein localises to the cytoplasm. Its subcellular location is the cytoskeleton. It is found in the spindle. The protein resides in the spindle pole. Possesses microtubule stabilizing properties. Involved in regulating aneuploidy, cell cycling, and cell death in a p53-dependent manner. The sequence is that of Cytoskeleton-associated protein 2 from Mus musculus (Mouse).